The following is a 537-amino-acid chain: Cytochrome P450 27C1 (537 aa).

Residue Cys483 coordinates heme.

Belongs to the cytochrome P450 family. It depends on heme as a cofactor. Expressed in the dorsal third of retinal pigment epithelium, but not in the ventral counterpart (at protein level).

It localises to the membrane. It catalyses the reaction all-trans-retinol + 2 reduced [adrenodoxin] + O2 + 2 H(+) = all-trans-3,4-didehydroretinol + 2 oxidized [adrenodoxin] + 2 H2O. Efficiently catalyzes the conversion of all-trans retinol (also called vitamin A1, the precursor of 11-cis retinal) to 3,4-didehydroretinol (also called vitamin A2, the precursor of 11-cis 3,4-didehydroretinal), also acts on all-trans retinal and all-trans retinoic acid. The replacement of 11-cis retinal chromophore in photopigments with 11-cis 3,4-didehydroretinal enhances sensitivity to long-wavelength light. This may improve vision in fresh water which is often turbid. This chain is Cytochrome P450 27C1 (cyp27c1), found in Aquarana catesbeiana (American bullfrog).